The following is a 426-amino-acid chain: UDP-N-acetylglucosamine 1-carboxyvinyltransferase (426 aa).

22 to 23 serves as a coordination point for phosphoenolpyruvate; the sequence is KN. Residue arginine 93 coordinates UDP-N-acetyl-alpha-D-glucosamine. Aspartate 117 serves as the catalytic Proton donor. UDP-N-acetyl-alpha-D-glucosamine contacts are provided by aspartate 312 and methionine 334.

The protein belongs to the EPSP synthase family. MurA subfamily.

It localises to the cytoplasm. The catalysed reaction is phosphoenolpyruvate + UDP-N-acetyl-alpha-D-glucosamine = UDP-N-acetyl-3-O-(1-carboxyvinyl)-alpha-D-glucosamine + phosphate. It functions in the pathway cell wall biogenesis; peptidoglycan biosynthesis. Cell wall formation. Adds enolpyruvyl to UDP-N-acetylglucosamine. In Treponema denticola (strain ATCC 35405 / DSM 14222 / CIP 103919 / JCM 8153 / KCTC 15104), this protein is UDP-N-acetylglucosamine 1-carboxyvinyltransferase.